A 327-amino-acid polypeptide reads, in one-letter code: Undecaprenyl-phosphate 4-deoxy-4-formamido-L-arabinose transferase (327 aa).

Helical transmembrane passes span 236 to 256 (LSVF…LLVV) and 270 to 290 (VFML…AMGL).

The protein belongs to the glycosyltransferase 2 family.

It is found in the cell inner membrane. It carries out the reaction UDP-4-deoxy-4-formamido-beta-L-arabinose + di-trans,octa-cis-undecaprenyl phosphate = 4-deoxy-4-formamido-alpha-L-arabinopyranosyl di-trans,octa-cis-undecaprenyl phosphate + UDP. It participates in glycolipid biosynthesis; 4-amino-4-deoxy-alpha-L-arabinose undecaprenyl phosphate biosynthesis; 4-amino-4-deoxy-alpha-L-arabinose undecaprenyl phosphate from UDP-4-deoxy-4-formamido-beta-L-arabinose and undecaprenyl phosphate: step 1/2. It functions in the pathway bacterial outer membrane biogenesis; lipopolysaccharide biosynthesis. Its function is as follows. Catalyzes the transfer of 4-deoxy-4-formamido-L-arabinose from UDP to undecaprenyl phosphate. The modified arabinose is attached to lipid A and is required for resistance to polymyxin and cationic antimicrobial peptides. In Enterobacter sp. (strain 638), this protein is Undecaprenyl-phosphate 4-deoxy-4-formamido-L-arabinose transferase.